The following is a 191-amino-acid chain: Ciliary microtubule-associated protein 3 (191 aa).

Interacts with proteins involved in ciliary transport, including ARL13B, CETN1, KIF3A, RAB6A, RAB8A, TUBB1 and TUBG1. Interacts with AURKA.

It localises to the cytoplasmic vesicle. The protein localises to the golgi apparatus. Its subcellular location is the trans-Golgi network. The protein resides in the cytoplasm. In terms of biological role, during primary cilia disassembly, involved in cilia disassembly. Required specifically to control cilia retraction as well as the liberation and duplication of the basal body/centrosome. May act by stimulating AURKA activity at the basal body in a cell cycle-dependent manner. The protein is Ciliary microtubule-associated protein 3 of Homo sapiens (Human).